Reading from the N-terminus, the 322-residue chain is tRNA-dihydrouridine synthase B (322 aa).

Residues 16 to 18 and glutamine 70 each bind FMN; that span reads PMA. Cysteine 100 acts as the Proton donor in catalysis. FMN is bound by residues lysine 139, 200 to 202, and 224 to 225; these read NGD and GR.

It belongs to the Dus family. DusB subfamily. It depends on FMN as a cofactor.

The catalysed reaction is a 5,6-dihydrouridine in tRNA + NAD(+) = a uridine in tRNA + NADH + H(+). It carries out the reaction a 5,6-dihydrouridine in tRNA + NADP(+) = a uridine in tRNA + NADPH + H(+). Functionally, catalyzes the synthesis of 5,6-dihydrouridine (D), a modified base found in the D-loop of most tRNAs, via the reduction of the C5-C6 double bond in target uridines. This chain is tRNA-dihydrouridine synthase B, found in Shewanella oneidensis (strain ATCC 700550 / JCM 31522 / CIP 106686 / LMG 19005 / NCIMB 14063 / MR-1).